Here is a 92-residue protein sequence, read N- to C-terminus: Small ribosomal subunit protein uS19 (92 aa).

The interval 73-92 is disordered; that stretch reads EFSPTRSFRGHAGAKNKGKK. The segment covering 80–92 has biased composition (basic residues); that stretch reads FRGHAGAKNKGKK.

It belongs to the universal ribosomal protein uS19 family.

Its function is as follows. Protein S19 forms a complex with S13 that binds strongly to the 16S ribosomal RNA. The protein is Small ribosomal subunit protein uS19 of Flavobacterium psychrophilum (strain ATCC 49511 / DSM 21280 / CIP 103535 / JIP02/86).